Consider the following 276-residue polypeptide: Undecaprenyl-diphosphatase 1 (276 aa).

The next 6 helical transmembrane spans lie at 44–63, 85–105, 109–129, 183–203, 214–234, and 249–269; these read ALAF…IWEY, VNLL…ADLI, LFNP…MLWA, AATE…AVYS, GDFA…MLAV, and FAWY…LGMI.

It belongs to the UppP family.

Its subcellular location is the cell inner membrane. The enzyme catalyses di-trans,octa-cis-undecaprenyl diphosphate + H2O = di-trans,octa-cis-undecaprenyl phosphate + phosphate + H(+). Functionally, catalyzes the dephosphorylation of undecaprenyl diphosphate (UPP). Confers resistance to bacitracin. This Stutzerimonas stutzeri (strain A1501) (Pseudomonas stutzeri) protein is Undecaprenyl-diphosphatase 1.